Consider the following 37-residue polypeptide: Large ribosomal subunit protein bL36c (37 aa).

It belongs to the bacterial ribosomal protein bL36 family.

The protein resides in the plastid. It localises to the chloroplast. In Piper cenocladum (Ant piper), this protein is Large ribosomal subunit protein bL36c.